Consider the following 472-residue polypeptide: Methanethiol oxidase (472 aa).

Belongs to the selenium-binding protein family.

The protein resides in the nucleus. The protein localises to the cytoplasm. Its subcellular location is the cytosol. It localises to the membrane. The catalysed reaction is methanethiol + O2 + H2O = hydrogen sulfide + formaldehyde + H2O2 + H(+). The protein operates within organosulfur degradation. Its function is as follows. Catalyzes the oxidation of methanethiol, an organosulfur compound known to be produced in substantial amounts by gut bacteria. Selenium-binding protein which may be involved in the sensing of reactive xenobiotics in the cytoplasm. May be involved in intra-Golgi protein transport. The sequence is that of Methanethiol oxidase (selenbp1) from Xenopus tropicalis (Western clawed frog).